The following is a 154-amino-acid chain: Transcriptional repressor NrdR (154 aa).

The segment at 3–34 (CPFCGANDTKVIDSRLVAEGEQVRRRRECVAC) is a zinc-finger region. Residues 49 to 139 (PRLIKQDGTR…VYRRFQDLDE (91 aa)) form the ATP-cone domain.

This sequence belongs to the NrdR family. Zn(2+) is required as a cofactor.

Functionally, negatively regulates transcription of bacterial ribonucleotide reductase nrd genes and operons by binding to NrdR-boxes. The chain is Transcriptional repressor NrdR from Pseudomonas entomophila (strain L48).